The sequence spans 195 residues: Small ribosomal subunit protein uS7 (195 aa).

It belongs to the universal ribosomal protein uS7 family. Part of the 30S ribosomal subunit.

Its function is as follows. One of the primary rRNA binding proteins, it binds directly to 16S rRNA where it nucleates assembly of the head domain of the 30S subunit. Is located at the subunit interface close to the decoding center. The polypeptide is Small ribosomal subunit protein uS7 (Sulfolobus acidocaldarius (strain ATCC 33909 / DSM 639 / JCM 8929 / NBRC 15157 / NCIMB 11770)).